Reading from the N-terminus, the 300-residue chain is Apolipoprotein E (300 aa).

The first 18 residues, 1 to 18, serve as a signal peptide directing secretion; it reads MKVLWAVLVVTLLAGCQA. The 8 X 22 AA approximate tandem repeats stretch occupies residues 74–246; that stretch reads VLMEDTMKEV…RLDEVREQME (173 aa). Tandem repeats lie at residues 75–95, 96–117, 118–139, 140–161, 162–183, 184–205, 206–224, and 225–243. Residue Met-137 is modified to Methionine sulfoxide. The residue at position 141 (Ser-141) is a Phosphoserine. The segment at 152–162 is LDL and other lipoprotein receptors binding; that stretch reads HLRKLRKRLLR. 156–159 is a binding site for heparin; sequence LRKR. The segment at 204-274 is lipid-binding and lipoprotein association; sequence TAALTSQPLQ…GWFEPMMEDI (71 aa). 220–227 serves as a coordination point for heparin; it reads GERLRGRL. Residues 262–274 are specificity for association with VLDL; it reads RLKGWFEPMMEDI.

Belongs to the apolipoprotein A1/A4/E family. Homotetramer. May interact with ABCA1; functionally associated with ABCA1 in the biogenesis of HDLs. May interact with APP/A4 amyloid-beta peptide; the interaction is extremely stable in vitro but its physiological significance is unclear. May interact with MAPT. May interact with MAP2. In the cerebrospinal fluid, interacts with secreted SORL1. Interacts with PMEL; this allows the loading of PMEL luminal fragment on ILVs to induce fibril nucleation. Post-translationally, APOE exists as multiple glycosylated and sialylated glycoforms within cells and in plasma. The extent of glycosylation and sialylation are tissue and context specific. Glycated in plasma VLDL. In terms of processing, phosphorylated by FAM20C in the extracellular medium.

It localises to the secreted. It is found in the extracellular space. The protein resides in the extracellular matrix. Its subcellular location is the extracellular vesicle. The protein localises to the endosome. It localises to the multivesicular body. Functionally, APOE is an apolipoprotein, a protein associating with lipid particles, that mainly functions in lipoprotein-mediated lipid transport between organs via the plasma and interstitial fluids. APOE is a core component of plasma lipoproteins and is involved in their production, conversion and clearance. Apolipoproteins are amphipathic molecules that interact both with lipids of the lipoprotein particle core and the aqueous environment of the plasma. As such, APOE associates with chylomicrons, chylomicron remnants, very low density lipoproteins (VLDL) and intermediate density lipoproteins (IDL) but shows a preferential binding to high-density lipoproteins (HDL). It also binds a wide range of cellular receptors including the LDL receptor/LDLR, the LDL receptor-related proteins LRP1, LRP2 and LRP8 and the very low-density lipoprotein receptor/VLDLR that mediate the cellular uptake of the APOE-containing lipoprotein particles. Finally, APOE also has a heparin-binding activity and binds heparan-sulfate proteoglycans on the surface of cells, a property that supports the capture and the receptor-mediated uptake of APOE-containing lipoproteins by cells. A main function of APOE is to mediate lipoprotein clearance through the uptake of chylomicrons, VLDLs, and HDLs by hepatocytes. APOE is also involved in the biosynthesis by the liver of VLDLs as well as their uptake by peripheral tissues ensuring the delivery of triglycerides and energy storage in muscle, heart and adipose tissues. By participating in the lipoprotein-mediated distribution of lipids among tissues, APOE plays a critical role in plasma and tissues lipid homeostasis. APOE is also involved in two steps of reverse cholesterol transport, the HDLs-mediated transport of cholesterol from peripheral tissues to the liver, and thereby plays an important role in cholesterol homeostasis. First, it is functionally associated with ABCA1 in the biogenesis of HDLs in tissues. Second, it is enriched in circulating HDLs and mediates their uptake by hepatocytes. APOE also plays an important role in lipid transport in the central nervous system, regulating neuron survival and sprouting. In Dinomys branickii (Pacarana), this protein is Apolipoprotein E (APOE).